The sequence spans 344 residues: Dihydroorotase (344 aa).

Positions 13 and 15 each coordinate Zn(2+). Residues 15 to 17 (HFR) and N41 each bind substrate. K98, H135, and H173 together coordinate Zn(2+). The residue at position 98 (K98) is an N6-carboxylysine. H135 is a substrate binding site. Residue L218 participates in substrate binding. A Zn(2+)-binding site is contributed by D246. The active site involves D246. Positions 250 and 262 each coordinate substrate.

This sequence belongs to the metallo-dependent hydrolases superfamily. DHOase family. Class II DHOase subfamily. As to quaternary structure, homodimer. It depends on Zn(2+) as a cofactor.

The catalysed reaction is (S)-dihydroorotate + H2O = N-carbamoyl-L-aspartate + H(+). It functions in the pathway pyrimidine metabolism; UMP biosynthesis via de novo pathway; (S)-dihydroorotate from bicarbonate: step 3/3. Catalyzes the reversible cyclization of carbamoyl aspartate to dihydroorotate. The sequence is that of Dihydroorotase from Shewanella sediminis (strain HAW-EB3).